We begin with the raw amino-acid sequence, 945 residues long: Leucine--tRNA ligase (945 aa).

The 'HIGH' region signature appears at proline 43–histidine 53. A 'KMSKS' region motif is present at residues lysine 638 to serine 642. Position 641 (lysine 641) interacts with ATP.

This sequence belongs to the class-I aminoacyl-tRNA synthetase family.

Its subcellular location is the cytoplasm. It carries out the reaction tRNA(Leu) + L-leucine + ATP = L-leucyl-tRNA(Leu) + AMP + diphosphate. In Pyrobaculum arsenaticum (strain DSM 13514 / JCM 11321 / PZ6), this protein is Leucine--tRNA ligase.